The sequence spans 497 residues: MORN repeat-containing protein 1 (497 aa).

The interval M1 to Y27 is disordered. 7 MORN repeats span residues Y39 to Y61, Y62 to D84, F86 to C108, Y109 to V131, Y132 to K154, Y155 to T177, and Y178 to T200. 2 disordered regions span residues G393–E425 and Q468–R497.

This is MORN repeat-containing protein 1 (MORN1) from Homo sapiens (Human).